A 225-amino-acid polypeptide reads, in one-letter code: uncharacterized protein (225 aa).

This is an uncharacterized protein from Methanocaldococcus jannaschii (strain ATCC 43067 / DSM 2661 / JAL-1 / JCM 10045 / NBRC 100440) (Methanococcus jannaschii).